Reading from the N-terminus, the 278-residue chain is Energy-coupling factor transporter ATP-binding protein EcfA (278 aa).

An ABC transporter domain is found at 4–239 (LETRDLKYSY…SETVRSANLR (236 aa)). An ATP-binding site is contributed by 37-44 (GPNGAGKS).

The protein belongs to the ABC transporter superfamily. Energy-coupling factor EcfA family. In terms of assembly, forms a stable energy-coupling factor (ECF) transporter complex composed of 2 membrane-embedded substrate-binding proteins (S component), 2 ATP-binding proteins (A component) and 2 transmembrane proteins (T component).

The protein localises to the cell membrane. Functionally, ATP-binding (A) component of a common energy-coupling factor (ECF) ABC-transporter complex. Unlike classic ABC transporters this ECF transporter provides the energy necessary to transport a number of different substrates. The protein is Energy-coupling factor transporter ATP-binding protein EcfA of Methanococcus maripaludis (strain DSM 14266 / JCM 13030 / NBRC 101832 / S2 / LL).